We begin with the raw amino-acid sequence, 566 residues long: Myo-inositol transporter 1A (566 aa).

At 1–64 (MSDEKNYGIS…ERTEKLTKFV (64 aa)) the chain is on the cytoplasmic side. The chain crosses the membrane as a helical span at residues 65–85 (VGLALFASVSGFCFGFDTGVI). Over 86-106 (SAALVSIKDDFGHILDDTEKE) the chain is Extracellular. Residues 107-127 (WISAATSCGALVGALSSGALA) form a helical membrane-spanning segment. At 128-140 (DRVGRKWTLAVGD) the chain is on the cytoplasmic side. A helical transmembrane segment spans residues 141–161 (VWFTLGAIIICSSFSVVQMIV). Over 162-163 (GR) the chain is Extracellular. The helical transmembrane segment at 164 to 184 (AVLGLGVGTAAAIAPLYIAEV) threads the bilayer. The Cytoplasmic segment spans residues 185–192 (APTRFRGA). Residues 193 to 213 (LVTVQSIAITGGQFFSYCIGI) form a helical membrane-spanning segment. The Extracellular segment spans residues 214–222 (PLTGHNGWR). Residues 223–243 (IQFAIGIVPAVVQAAVVHFLP) form a helical membrane-spanning segment. The Cytoplasmic segment spans residues 244 to 313 (ESPRYDLLRG…VLTEGKYRKP (70 aa)). The helical transmembrane segment at 314–334 (AITALGIGIFQQLCGFNSLMY) threads the bilayer. The Extracellular portion of the chain corresponds to 335–349 (YAATIFSYAGFDNPT). The helical transmembrane segment at 350–370 (SVGLIVSGTNWFFTFVAMMIL) threads the bilayer. At 371-377 (DRVGKRR) the chain is on the cytoplasmic side. The helical transmembrane segment at 378 to 398 (ILLSTYPGMIAGLALASVAFW) threads the bilayer. Residues 399–421 (KMTGSTGHRLVEGTEYPQQWSNM) are Extracellular-facing. Residues 422–442 (MLGMMVVFIAFYATGSGNITW) traverse the membrane as a helical segment. The Cytoplasmic segment spans residues 443-458 (TVGEMFPLEMRGIGAS). The chain crosses the membrane as a helical span at residues 459-479 (ILAGGVWAANIVISATFLTLM). The Extracellular segment spans residues 480–485 (NAIGPT). A helical transmembrane segment spans residues 486–506 (PTFALYAGICLAGLIFIYFCY). The Cytoplasmic segment spans residues 507–566 (PEPSGLSLEEIQIIYNYGFGVQKSREIRAEHKLKAQEMRDRANSHIGGSATASDDQLNKV). The segment at 546-566 (DRANSHIGGSATASDDQLNKV) is disordered. The span at 556–566 (ATASDDQLNKV) shows a compositional bias: polar residues.

The protein belongs to the major facilitator superfamily. Sugar transporter (TC 2.A.1.1) family.

It localises to the cell membrane. The enzyme catalyses myo-inositol(out) + H(+)(out) = myo-inositol(in) + H(+)(in). In terms of biological role, major transporter for myo-inositol. Plays a role in the traversal of the host blood-brain barrier. The polypeptide is Myo-inositol transporter 1A (Cryptococcus neoformans var. grubii serotype A (strain H99 / ATCC 208821 / CBS 10515 / FGSC 9487) (Filobasidiella neoformans var. grubii)).